A 393-amino-acid polypeptide reads, in one-letter code: uncharacterized protein (393 aa).

Disordered regions lie at residues 77 to 118 (DSNN…SIRP) and 259 to 296 (INNNNNNNNNNSNNNNNNNNSNNNDNNNNINTKVDESN). Positions 79–92 (NNNNNNNNNNNNNN) are enriched in low complexity. The span at 103–114 (IRQSLSSPQQLV) shows a compositional bias: polar residues. Positions 259-289 (INNNNNNNNNNSNNNNNNNNSNNNDNNNNIN) are enriched in low complexity.

This is an uncharacterized protein from Dictyostelium discoideum (Social amoeba).